A 342-amino-acid chain; its full sequence is Foldase protein PrsA (342 aa).

Residues 1–20 (MKKKLILAAAGAMAVFSLAA) form the signal peptide. Cys-21 is lipidated: N-palmitoyl cysteine. Cys-21 carries the S-diacylglycerol cysteine lipid modification. Residues 142-235 (HPEVEAQIIQ…QTYQTTYYVV (94 aa)) form the PpiC domain. Positions 297 to 342 (MQTESSSASSEKKESKSSDSKTSDTKTSDSEKATDSSSKTTESSSK) are disordered. A compositionally biased stretch (basic and acidic residues) spans 306–330 (SEKKESKSSDSKTSDTKTSDSEKAT). Residues 331–342 (DSSSKTTESSSK) are compositionally biased toward low complexity.

It belongs to the PrsA family.

The protein resides in the cell membrane. The catalysed reaction is [protein]-peptidylproline (omega=180) = [protein]-peptidylproline (omega=0). Plays a major role in protein secretion by helping the post-translocational extracellular folding of several secreted proteins. The protein is Foldase protein PrsA of Enterococcus faecalis (strain ATCC 700802 / V583).